Here is an 83-residue protein sequence, read N- to C-terminus: High-potential iron-sulfur protein (83 aa).

The [4Fe-4S] cluster site is built by C43, C46, C61, and C75.

It belongs to the high-potential iron-sulfur protein (HiPIP) family. As to quaternary structure, homodimer.

In terms of biological role, specific class of high-redox-potential 4Fe-4S ferredoxins. Functions in anaerobic electron transport in most purple and in some other photosynthetic bacteria and in at least one genus (Paracoccus) of halophilic, denitrifying bacteria. The protein is High-potential iron-sulfur protein (hip) of Thermochromatium tepidum (Chromatium tepidum).